We begin with the raw amino-acid sequence, 129 residues long: M-zodatoxin-Lt8k (129 aa).

A signal peptide spans 1-20; that stretch reads MKYFVVALALVAAFACIAES. The propeptide occupies 21 to 60; the sequence is KPAESEHELAEVEEENELADLEDAVWLEHLADLSDLEEAR.

Belongs to the cationic peptide 06 (cytoinsectotoxin) family. Expressed by the venom gland.

The protein localises to the secreted. Its function is as follows. Insecticidal, cytolytic and antimicrobial peptide. Forms voltage-dependent, ion-permeable channels in membranes. At high concentration causes cell membrane lysis. This chain is M-zodatoxin-Lt8k (cit 1-10), found in Lachesana tarabaevi (Spider).